We begin with the raw amino-acid sequence, 66 residues long: Large ribosomal subunit protein bL31 (66 aa).

Cys16, Cys18, Cys36, and Cys39 together coordinate Zn(2+).

Belongs to the bacterial ribosomal protein bL31 family. Type A subfamily. Part of the 50S ribosomal subunit. The cofactor is Zn(2+).

In terms of biological role, binds the 23S rRNA. This Geobacillus kaustophilus (strain HTA426) protein is Large ribosomal subunit protein bL31.